The sequence spans 590 residues: Urease subunit alpha (590 aa).

A Urease domain is found at 134–590 (GGIDSHIHFI…LPLAQRYFLF (457 aa)). Residues H139, H141, and K222 each contribute to the Ni(2+) site. K222 is modified (N6-carboxylysine). A substrate-binding site is contributed by H224. Residues H251 and H277 each coordinate Ni(2+). H325 (proton donor) is an active-site residue. A Ni(2+)-binding site is contributed by D365. The disordered stretch occupies residues 388–416 (QQRGWLSPPAAGQGAGLSSAAGQGVDHDT). Positions 393 to 411 (LSPPAAGQGAGLSSAAGQG) are enriched in low complexity.

Belongs to the metallo-dependent hydrolases superfamily. Urease alpha subunit family. Heterotrimer of UreA (gamma), UreB (beta) and UreC (alpha) subunits. Three heterotrimers associate to form the active enzyme. Requires Ni cation as cofactor. Carboxylation allows a single lysine to coordinate two nickel ions.

The protein resides in the cytoplasm. The catalysed reaction is urea + 2 H2O + H(+) = hydrogencarbonate + 2 NH4(+). It functions in the pathway nitrogen metabolism; urea degradation; CO(2) and NH(3) from urea (urease route): step 1/1. The sequence is that of Urease subunit alpha from Verminephrobacter eiseniae (strain EF01-2).